The chain runs to 326 residues: NDRG-like protein (326 aa).

It belongs to the NDRG family.

This is NDRG-like protein from Dictyostelium discoideum (Social amoeba).